Reading from the N-terminus, the 223-residue chain is UPF0441 protein YgiB (223 aa).

Residues 178–195 (TVPKTAMAPKPATTTTVT) are compositionally biased toward low complexity. A disordered region spans residues 178-223 (TVPKTAMAPKPATTTTVTRGGFGESVAKQSTMQRSAAGTSTRSMGG). Polar residues predominate over residues 204 to 223 (AKQSTMQRSAAGTSTRSMGG).

The protein belongs to the UPF0441 family.

This chain is UPF0441 protein YgiB, found in Salmonella paratyphi A (strain ATCC 9150 / SARB42).